The following is a 407-amino-acid chain: Peptidase T (407 aa).

A Zn(2+)-binding site is contributed by His82. The active site involves Asp84. Asp143 lines the Zn(2+) pocket. Glu177 (proton acceptor) is an active-site residue. Zn(2+)-binding residues include Glu178, Asp200, and His382.

Belongs to the peptidase M20B family. Zn(2+) is required as a cofactor.

The protein localises to the cytoplasm. The enzyme catalyses Release of the N-terminal residue from a tripeptide.. Cleaves the N-terminal amino acid of tripeptides. The sequence is that of Peptidase T from Streptococcus pyogenes serotype M4 (strain MGAS10750).